Here is a 229-residue protein sequence, read N- to C-terminus: Protein GrpE (229 aa).

Disordered regions lie at residues 1 to 49 and 207 to 229; these read MTEG…SANS and DSTA…EDGD. Residues 13 to 24 show a composition bias toward basic and acidic residues; sequence TDKRRIDPDTGE.

Belongs to the GrpE family. In terms of assembly, homodimer.

It is found in the cytoplasm. In terms of biological role, participates actively in the response to hyperosmotic and heat shock by preventing the aggregation of stress-denatured proteins, in association with DnaK and GrpE. It is the nucleotide exchange factor for DnaK and may function as a thermosensor. Unfolded proteins bind initially to DnaJ; upon interaction with the DnaJ-bound protein, DnaK hydrolyzes its bound ATP, resulting in the formation of a stable complex. GrpE releases ADP from DnaK; ATP binding to DnaK triggers the release of the substrate protein, thus completing the reaction cycle. Several rounds of ATP-dependent interactions between DnaJ, DnaK and GrpE are required for fully efficient folding. In Mycobacterium leprae (strain TN), this protein is Protein GrpE.